The primary structure comprises 101 residues: Ribonuclease kappa-B (101 aa).

A run of 2 helical transmembrane segments spans residues 13-33 (ACGI…GIFF) and 68-88 (VGIN…VSLC).

This sequence belongs to the RNase K family.

The protein resides in the membrane. Endoribonuclease which preferentially cleaves ApU and ApG phosphodiester bonds. The sequence is that of Ribonuclease kappa-B (rnasekb) from Danio rerio (Zebrafish).